A 398-amino-acid polypeptide reads, in one-letter code: Nonsense-mediated decay protein 4 (398 aa).

The segment at P327–R355 is disordered. The span at K335–R350 shows a compositional bias: basic residues.

It localises to the cytoplasm. Involved in nonsense-mediated decay of mRNAs containing premature stop codons. The sequence is that of Nonsense-mediated decay protein 4 (NMD4) from Candida albicans (strain SC5314 / ATCC MYA-2876) (Yeast).